The sequence spans 307 residues: Potassium channel subfamily K member 7 (307 aa).

Over 1–10 (MGGLRPWSRY) the chain is Cytoplasmic. A helical transmembrane segment spans residues 11-31 (GLLVVAHLLALGLGAVVFQAL). The N-linked (GlcNAc...) asparagine glycan is linked to N83. The segment at residues 92 to 119 (LPSALLFAASILTTTGYGHMAPLSPGGK) is an intramembrane region (pore-forming). The helical transmembrane segment at 120–140 (AFCMVYAALGLPASLALVATL) threads the bilayer. The Cytoplasmic segment spans residues 141–170 (RHCLLPVLSRPRAWVAVHWQLSPARAALLQ). A helical membrane pass occupies residues 171–191 (AVALGLLVASSFVLLPALVLW). An intramembrane region (pore-forming) is located at residues 199 to 227 (LLGAVYFCFSSLSTIGLEDLLPGRGRSLH). The helical transmembrane segment at 233-253 (LGQLALLGYLLLGLLAMLLAV) threads the bilayer. The Cytoplasmic segment spans residues 254-307 (ETFSELPQVRAMGKFFRPSGPVTAEDQGGILGQDELALSTLPPAAPASGQAPAC).

Belongs to the two pore domain potassium channel (TC 1.A.1.8) family. Homodimer.

Its subcellular location is the membrane. Functionally, probable potassium channel subunit. No channel activity observed in vitro as protein remains in the endoplasmic reticulum. May need to associate with an as yet unknown partner in order to reach the plasma membrane. This chain is Potassium channel subfamily K member 7 (KCNK7), found in Homo sapiens (Human).